The following is a 288-amino-acid chain: 2-hydroxy-6-oxononadienedioate/2-hydroxy-6-oxononatrienedioate hydrolase (288 aa).

The region spanning 38-273 is the AB hydrolase-1 domain; it reads VVLLHGSGPG…DCGHWAQWEH (236 aa). The active-site Proton acceptor is H267.

This sequence belongs to the AB hydrolase superfamily. MhpC family. As to quaternary structure, homodimer.

It catalyses the reaction (2Z,4E)-2-hydroxy-6-oxonona-2,4-dienedioate + H2O = (2Z)-2-hydroxypenta-2,4-dienoate + succinate + H(+). It carries out the reaction (2Z,4E,7E)-2-hydroxy-6-oxonona-2,4,7-trienedioate + H2O = (2Z)-2-hydroxypenta-2,4-dienoate + fumarate + H(+). It functions in the pathway aromatic compound metabolism; 3-phenylpropanoate degradation. Its function is as follows. Catalyzes the cleavage of the C5-C6 bond of 2-hydroxy-6-oxononadienedioate and 2-hydroxy-6-oxononatrienedioate, a dienol ring fission product of the bacterial meta-cleavage pathway for degradation of phenylpropionic acid. The polypeptide is 2-hydroxy-6-oxononadienedioate/2-hydroxy-6-oxononatrienedioate hydrolase (Escherichia coli O139:H28 (strain E24377A / ETEC)).